The chain runs to 274 residues: Guanylyl cyclase 1 (274 aa).

Functions both as monomer and homooligomer. Requires Mg(2+) as cofactor.

It carries out the reaction GTP = 3',5'-cyclic GMP + diphosphate. The protein operates within nucleotide metabolism. In terms of biological role, magnesium-dependent guanylyl cyclase that catalyzes the formation of guanosine 3',5'-cyclic monophosphate (cGMP) from guanosine 5'-triphosphate (GTP). Can also use ATP as substrate with a low activity. This Arabidopsis thaliana (Mouse-ear cress) protein is Guanylyl cyclase 1.